Consider the following 332-residue polypeptide: MKRIPSLIIGLLLILATWHSVLAINDNYDLIIVRNDDLIDYLISLPYSHLINAPILPVNPKELDPVTKAQLYSYIQLGRDKVLIIGNTNAVSLDVEKELRDMGFSVTRIGGADRAETAEKLALHFYQNGSKVVILASAWDYGSTLAAAEFAMEYKCPILLTWENQLSPSALRGIEKLNAKIVILVGFGINETIEKTLEGMGYETYWIGRDIEPPPIETTTSSPPQSSGSKSFFLGMIVTLIILAPVILYLWRRRSERMSEFLEQFNEKELAVLKAIMERGGEVKQEDLPRIVGYSRPTISRIVQDLEKKGIVEREKSGKTFIVRVIKKIKID.

The first 23 residues, 1–23, serve as a signal peptide directing secretion; that stretch reads MKRIPSLIIGLLLILATWHSVLA. Residues 231–251 form a helical membrane-spanning segment; that stretch reads SFFLGMIVTLIILAPVILYLW.

The protein localises to the membrane. This is an uncharacterized protein from Pyrococcus horikoshii (strain ATCC 700860 / DSM 12428 / JCM 9974 / NBRC 100139 / OT-3).